We begin with the raw amino-acid sequence, 209 residues long: Kunitz trypsin inhibitor 1 (209 aa).

The N-terminal stretch at Met1–Ala22 is a signal peptide. 2 disulfides stabilise this stretch: Cys63–Cys107 and Cys154–Cys162. Asn156 carries an N-linked (GlcNAc...) asparagine glycan.

It belongs to the protease inhibitor I3 (leguminous Kunitz-type inhibitor) family.

Exhibits Kunitz trypsin protease inhibitor activity. This chain is Kunitz trypsin inhibitor 1, found in Arabidopsis thaliana (Mouse-ear cress).